The following is a 434-amino-acid chain: Ribonuclease T2-like (434 aa).

The first 18 residues, 1 to 18 (MLLKNLHSLLQLPIFSNG), serve as a signal peptide directing secretion. Intrachain disulfides connect Cys-27-Cys-46, Cys-35-Cys-94, Cys-45-Cys-171, Cys-102-Cys-163, and Cys-241-Cys-277. Asn-37 and Asn-70 each carry an N-linked (GlcNAc...) asparagine glycan. His-87 is a catalytic residue. Asn-103 and Asn-123 each carry an N-linked (GlcNAc...) asparagine glycan. Active-site residues include Glu-156 and His-160.

Belongs to the RNase T2 family. Post-translationally, N-glycosylated.

The protein localises to the vacuole lumen. Its subcellular location is the cytoplasm. The enzyme catalyses a ribonucleotidyl-ribonucleotide-RNA + H2O = a 3'-end 3'-phospho-ribonucleotide-RNA + a 5'-end dephospho-ribonucleoside-RNA + H(+). In terms of biological role, rnase which modulates cell survival under stress conditions. Released from the vacuole to the cytoplasm during stress to promote tRNA and rRNA cleavage and to activate separately a downstream pathway that promotes cell death. Involved in cell size, vacuolar morphology and growth at high temperatures and high salt concentration. The sequence is that of Ribonuclease T2-like (RNY1) from Saccharomyces cerevisiae (strain ATCC 204508 / S288c) (Baker's yeast).